Consider the following 207-residue polypeptide: Ras-related protein Rab-5B (207 aa).

A lipid anchor (N-myristoyl glycine) is attached at G2. GTP-binding positions include 41-49 (GDSGVGKSS), 60-66 (SEKHQVT), 90-94 (DTGGQ), 148-151 (NKKD), and 176-178 (SAK). The short motif at 63–71 (HQVTIGAAF) is the Effector region element.

The protein belongs to the small GTPase superfamily. Rab family. In terms of assembly, interacts with CK1. May interact with ARF1. Myristoylation is required for cell membrane and food vacuole membrane localization. In terms of processing, may be palmitoylated on Cys-3. Post-translationally, lacks the C-terminal cysteine motifs subject to isoprenylation present in mammalian RAB5B homolog.

It localises to the cell membrane. It is found in the vacuole membrane. Its subcellular location is the vesicle. It catalyses the reaction GTP + H2O = GDP + phosphate + H(+). With respect to regulation, alternates between an inactive GDP-bound form and an active GTP-bound form. Activated by guanine nucleotide-exchange factors (GEFs) and inactivated by GTPase-activating proteins (GAPs). Its function is as follows. Small GTPase which regulates vesicle trafficking between organelles. May be involved in the trafficking of the N-myristoylated AK2 from the endoplasmic reticulum to the parasitophorous vacuole membrane. The sequence is that of Ras-related protein Rab-5B from Plasmodium falciparum (isolate 3D7).